We begin with the raw amino-acid sequence, 201 residues long: Recombination protein RecR (201 aa).

The C4-type zinc-finger motif lies at 59-74 (CEICGNMDTENMCRIC). Residues 82–177 (SIIAIVETVA…KISRLASGIP (96 aa)) form the Toprim domain.

Belongs to the RecR family.

In terms of biological role, may play a role in DNA repair. It seems to be involved in an RecBC-independent recombinational process of DNA repair. It may act with RecF and RecO. The protein is Recombination protein RecR of Rickettsia africae (strain ESF-5).